The primary structure comprises 96 residues: Putative pterin-4-alpha-carbinolamine dehydratase (96 aa).

This sequence belongs to the pterin-4-alpha-carbinolamine dehydratase family.

The catalysed reaction is (4aS,6R)-4a-hydroxy-L-erythro-5,6,7,8-tetrahydrobiopterin = (6R)-L-erythro-6,7-dihydrobiopterin + H2O. The sequence is that of Putative pterin-4-alpha-carbinolamine dehydratase from Paraburkholderia xenovorans (strain LB400).